The sequence spans 84 residues: U4-theraphotoxin-Hhn1a (84 aa).

An N-terminal signal peptide occupies residues 1–22 (MKVTLIAILTCAAVLVLHTTAA). Residues 23 to 47 (EELEESQLMEVGMPDTELAAVDGER) constitute a propeptide that is removed on maturation. 3 disulfide bridges follow: Cys-51/Cys-65, Cys-55/Cys-76, and Cys-70/Cys-81.

The protein belongs to the neurotoxin 12 (Hwtx-2) family. 02 (Hwtx-2) subfamily. Expressed by the venom gland.

It localises to the secreted. Its function is as follows. Postsynaptic neurotoxin. The chain is U4-theraphotoxin-Hhn1a from Cyriopagopus hainanus (Chinese bird spider).